The chain runs to 424 residues: Serine--tRNA ligase (424 aa).

Position 231–233 (231–233) interacts with L-serine; it reads TAE. 262-264 serves as a coordination point for ATP; it reads RSE. Glu285 lines the L-serine pocket. 349-352 serves as a coordination point for ATP; that stretch reads EISS. Residue Ser385 coordinates L-serine.

This sequence belongs to the class-II aminoacyl-tRNA synthetase family. Type-1 seryl-tRNA synthetase subfamily. Homodimer. The tRNA molecule binds across the dimer.

The protein resides in the cytoplasm. It carries out the reaction tRNA(Ser) + L-serine + ATP = L-seryl-tRNA(Ser) + AMP + diphosphate + H(+). It catalyses the reaction tRNA(Sec) + L-serine + ATP = L-seryl-tRNA(Sec) + AMP + diphosphate + H(+). It participates in aminoacyl-tRNA biosynthesis; selenocysteinyl-tRNA(Sec) biosynthesis; L-seryl-tRNA(Sec) from L-serine and tRNA(Sec): step 1/1. Functionally, catalyzes the attachment of serine to tRNA(Ser). Is also able to aminoacylate tRNA(Sec) with serine, to form the misacylated tRNA L-seryl-tRNA(Sec), which will be further converted into selenocysteinyl-tRNA(Sec). This chain is Serine--tRNA ligase, found in Bacillus cereus (strain ZK / E33L).